Here is a 1449-residue protein sequence, read N- to C-terminus: Gag-Pol polyprotein (1449 aa).

Gly2 carries N-myristoyl glycine; by host lipidation. Positions 16–22 (LEKVRLR) match the Nuclear export signal motif. The Nuclear localization signal signature appears at 26–32 (KKKYMLK). The disordered stretch occupies residues 215-237 (DLQHPQPGPLPAGQLREPRGSDI). 2 consecutive CCHC-type zinc fingers follow at residues 392–409 (IKCW…QCRA) and 413–430 (QGCW…KCPE). The interval 442–494 (GKEAPQFPHGPDASGADTNCSPRGSSCGSTEELHEDGQKAEGEQRETLQGGDR) is disordered. Residues 457-470 (ADTNCSPRGSSCGS) show a composition bias toward polar residues. Basic and acidic residues predominate over residues 472–487 (EELHEDGQKAEGEQRE). A Peptidase A2 domain is found at 518–587 (VEVLLDTGAD…TPINIFGRNL (70 aa)). Asp523 serves as the catalytic For protease activity; shared with dimeric partner. A Reverse transcriptase domain is found at 641–831 (DGQLEEAPPT…PPFQWMGYEL (191 aa)). Mg(2+)-binding residues include Asp707, Asp782, and Asp783. The tract at residues 824-832 (FQWMGYELW) is RT 'primer grip'. Positions 994–1010 (WEQWWTDYWQVTWIPDW) match the Tryptophan repeat motif motif. The region spanning 1030–1153 (IQGAETFYVD…VDHLVSQGIR (124 aa)) is the RNase H type-1 domain. The Mg(2+) site is built by Asp1039, Glu1074, Asp1094, and Asp1145. The Integrase-type zinc finger occupies 1159 to 1200 (KKIEPAQEEHEKYHSNVKELVFKFGLPRLVAKQIVDTCDKCH). Positions 1168, 1172, 1196, and 1199 each coordinate Zn(2+). The 151-residue stretch at 1210–1360 (VNAELGTWQM…TPAERLVNMI (151 aa)) folds into the Integrase catalytic domain. Mg(2+) is bound by residues Asp1220 and Asp1272. Positions 1379–1426 (FRVYYREGRDQLWKGPGELLWKGEGAVILKVGTEIKVVPRRKAKIIKD) form a DNA-binding region, integrase-type.

In terms of assembly, homotrimer. Interacts with gp41 (via C-terminus). As to quaternary structure, homodimer. The active site consists of two apposed aspartic acid residues. Heterodimer of p66 RT and p51 RT (RT p66/p51). Heterodimerization of RT is essential for DNA polymerase activity. Despite the sequence identities, p66 RT and p51 RT have distinct folding. In terms of assembly, homotetramer; may further associate as a homohexadecamer. It depends on Mg(2+) as a cofactor. Specific enzymatic cleavages by the viral protease yield mature proteins. The protease is released by autocatalytic cleavage. The polyprotein is cleaved during and after budding, this process is termed maturation. Proteolytic cleavage of p66 RT removes the RNase H domain to yield the p51 RT subunit. In terms of processing, capsid protein p24 is phosphorylated.

The protein localises to the virion. It is found in the host nucleus. It localises to the host cytoplasm. The protein resides in the host cell membrane. The catalysed reaction is Specific for a P1 residue that is hydrophobic, and P1' variable, but often Pro.. It carries out the reaction Endohydrolysis of RNA in RNA/DNA hybrids. Three different cleavage modes: 1. sequence-specific internal cleavage of RNA. Human immunodeficiency virus type 1 and Moloney murine leukemia virus enzymes prefer to cleave the RNA strand one nucleotide away from the RNA-DNA junction. 2. RNA 5'-end directed cleavage 13-19 nucleotides from the RNA end. 3. DNA 3'-end directed cleavage 15-20 nucleotides away from the primer terminus.. The enzyme catalyses 3'-end directed exonucleolytic cleavage of viral RNA-DNA hybrid.. It catalyses the reaction DNA(n) + a 2'-deoxyribonucleoside 5'-triphosphate = DNA(n+1) + diphosphate. Its activity is regulated as follows. The viral protease is inhibited by many synthetic protease inhibitors (PIs), such as amprenavir, atazanavir, indinavir, loprinavir, nelfinavir, ritonavir and saquinavir. RT can be inhibited either by nucleoside RT inhibitors (NRTIs) or by non nucleoside RT inhibitors (NNRTIs). NRTIs act as chain terminators, whereas NNRTIs inhibit DNA polymerization by binding a small hydrophobic pocket near the RT active site and inducing an allosteric change in this region. Classical NRTIs are abacavir, adefovir (PMEA), didanosine (ddI), lamivudine (3TC), stavudine (d4T), tenofovir (PMPA), zalcitabine (ddC), and zidovudine (AZT). Classical NNRTIs are atevirdine (BHAP U-87201E), delavirdine, efavirenz (DMP-266), emivirine (I-EBU), and nevirapine (BI-RG-587). The tritherapies used as a basic effective treatment of AIDS associate two NRTIs and one NNRTI. Use of protease inhibitors in tritherapy regimens permit more ambitious therapeutic strategies. Functionally, gag-Pol polyprotein and Gag polyprotein may regulate their own translation, by the binding genomic RNA in the 5'-UTR. At low concentration, Gag-Pol and Gag would promote translation, whereas at high concentration, the polyproteins encapsidate genomic RNA and then shut off translation. In terms of biological role, matrix protein p17 has two main functions: in infected cell, it targets Gag and Gag-pol polyproteins to the plasma membrane via a multipartite membrane-binding signal, that includes its myristointegration complex. The myristoylation signal and the NLS exert conflicting influences its subcellular localization. The key regulation of these motifs might be phosphorylation of a portion of MA molecules on the C-terminal tyrosine at the time of virus maturation, by virion-associated cellular tyrosine kinase. Implicated in the release from host cell mediated by Vpu. Capsid protein p24 forms the conical core that encapsulates the genomic RNA-nucleocapsid complex in the virion. The core is constituted by capsid protein hexamer subunits. The core is disassembled soon after virion entry. Interaction with host PPIA/CYPA protects the virus from restriction by host TRIM5-alpha and from an unknown antiviral activity in host cells. This capsid restriction by TRIM5 is one of the factors which restricts SIV to the simian species. Its function is as follows. Nucleocapsid protein p7 encapsulates and protects viral dimeric unspliced (genomic) RNA. Binds these RNAs through its zinc fingers. Facilitates rearangement of nucleic acid secondary structure during retrotranscription of genomic RNA. This capability is referred to as nucleic acid chaperone activity. Functionally, the aspartyl protease mediates proteolytic cleavages of Gag and Gag-Pol polyproteins during or shortly after the release of the virion from the plasma membrane. Cleavages take place as an ordered, step-wise cascade to yield mature proteins. This process is called maturation. Displays maximal activity during the budding process just prior to particle release from the cell. Also cleaves Nef and Vif, probably concomitantly with viral structural proteins on maturation of virus particles. Hydrolyzes host EIF4GI and PABP1 in order to shut off the capped cellular mRNA translation. The resulting inhibition of cellular protein synthesis serves to ensure maximal viral gene expression and to evade host immune response. In terms of biological role, reverse transcriptase/ribonuclease H (RT) is a multifunctional enzyme that converts the viral dimeric RNA genome into dsDNA in the cytoplasm, shortly after virus entry into the cell. This enzyme displays a DNA polymerase activity that can copy either DNA or RNA templates, and a ribonuclease H (RNase H) activity that cleaves the RNA strand of RNA-DNA heteroduplexes in a partially processive 3' to 5' endonucleasic mode. Conversion of viral genomic RNA into dsDNA requires many steps. A tRNA binds to the primer-binding site (PBS) situated at the 5'-end of the viral RNA. RT uses the 3' end of the tRNA primer to perform a short round of RNA-dependent minus-strand DNA synthesis. The reading proceeds through the U5 region and ends after the repeated (R) region which is present at both ends of viral RNA. The portion of the RNA-DNA heteroduplex is digested by the RNase H, resulting in a ssDNA product attached to the tRNA primer. This ssDNA/tRNA hybridizes with the identical R region situated at the 3' end of viral RNA. This template exchange, known as minus-strand DNA strong stop transfer, can be either intra- or intermolecular. RT uses the 3' end of this newly synthesized short ssDNA to perform the RNA-dependent minus-strand DNA synthesis of the whole template. RNase H digests the RNA template except for two polypurine tracts (PPTs) situated at the 5'-end and near the center of the genome. It is not clear if both polymerase and RNase H activities are simultaneous. RNase H can probably proceed both in a polymerase-dependent (RNA cut into small fragments by the same RT performing DNA synthesis) and a polymerase-independent mode (cleavage of remaining RNA fragments by free RTs). Secondly, RT performs DNA-directed plus-strand DNA synthesis using the PPTs that have not been removed by RNase H as primers. PPTs and tRNA primers are then removed by RNase H. The 3' and 5' ssDNA PBS regions hybridize to form a circular dsDNA intermediate. Strand displacement synthesis by RT to the PBS and PPT ends produces a blunt ended, linear dsDNA copy of the viral genome that includes long terminal repeats (LTRs) at both ends. Integrase catalyzes viral DNA integration into the host chromosome, by performing a series of DNA cutting and joining reactions. This enzyme activity takes place after virion entry into a cell and reverse transcription of the RNA genome in dsDNA. The first step in the integration process is 3' processing. This step requires a complex comprising the viral genome, matrix protein, Vpr and integrase. This complex is called the pre-integration complex (PIC). The integrase protein removes 2 nucleotides from each 3' end of the viral DNA, leaving recessed CA OH's at the 3' ends. In the second step, the PIC enters cell nucleus. This process is mediated through integrase and Vpr proteins, and allows the virus to infect a non dividing cell. This ability to enter the nucleus is specific of lentiviruses, other retroviruses cannot and rely on cell division to access cell chromosomes. In the third step, termed strand transfer, the integrase protein joins the previously processed 3' ends to the 5' ends of strands of target cellular DNA at the site of integration. The 5'-ends are produced by integrase-catalyzed staggered cuts, 5 bp apart. A Y-shaped, gapped, recombination intermediate results, with the 5'-ends of the viral DNA strands and the 3' ends of target DNA strands remaining unjoined, flanking a gap of 5 bp. The last step is viral DNA integration into host chromosome. This involves host DNA repair synthesis in which the 5 bp gaps between the unjoined strands are filled in and then ligated. Since this process occurs at both cuts flanking the SIV genome, a 5 bp duplication of host DNA is produced at the ends of SIV integration. Alternatively, Integrase may catalyze the excision of viral DNA just after strand transfer, this is termed disintegration. This is Gag-Pol polyprotein (gag-pol) from Cercopithecidae (Old World monkeys).